Here is a 238-residue protein sequence, read N- to C-terminus: Ribonuclease PH (238 aa).

Phosphate contacts are provided by residues arginine 86 and glycine 124–arginine 126.

It belongs to the RNase PH family. As to quaternary structure, homohexameric ring arranged as a trimer of dimers.

The catalysed reaction is tRNA(n+1) + phosphate = tRNA(n) + a ribonucleoside 5'-diphosphate. Functionally, phosphorolytic 3'-5' exoribonuclease that plays an important role in tRNA 3'-end maturation. Removes nucleotide residues following the 3'-CCA terminus of tRNAs; can also add nucleotides to the ends of RNA molecules by using nucleoside diphosphates as substrates, but this may not be physiologically important. Probably plays a role in initiation of 16S rRNA degradation (leading to ribosome degradation) during starvation. The chain is Ribonuclease PH from Phenylobacterium zucineum (strain HLK1).